The following is a 430-amino-acid chain: Dihydrolipoyllysine-residue acetyltransferase component of pyruvate dehydrogenase complex (430 aa).

Residues 2–77 (AFEFRLPDIG…VVGDVIVKID (76 aa)) form the Lipoyl-binding domain. Residue K43 is modified to N6-lipoyllysine. A disordered region spans residues 80-122 (DAEDMQFKGHDDDSSSKEEPAKEEAPAEQAPVATQTEEVDENR). Residues 84–104 (MQFKGHDDDSSSKEEPAKEEA) are compositionally biased toward basic and acidic residues. The Peripheral subunit-binding (PSBD) domain maps to 125–162 (KAMPSVRKYAREKGVNIKAVSGSGKNGRITKEDVDAYL). Residues 165–199 (GAPTASNESAASATNEEVAETPAAPAAVSLEGDFP) are disordered. Low complexity predominate over residues 168–192 (TASNESAASATNEEVAETPAAPAAV). The active site involves H401.

This sequence belongs to the 2-oxoacid dehydrogenase family. Forms a 24-polypeptide structural core with octahedral symmetry. (R)-lipoate serves as cofactor.

It catalyses the reaction N(6)-[(R)-dihydrolipoyl]-L-lysyl-[protein] + acetyl-CoA = N(6)-[(R)-S(8)-acetyldihydrolipoyl]-L-lysyl-[protein] + CoA. The pyruvate dehydrogenase complex catalyzes the overall conversion of pyruvate to acetyl-CoA and CO(2). It contains multiple copies of three enzymatic components: pyruvate dehydrogenase (E1), dihydrolipoamide acetyltransferase (E2) and lipoamide dehydrogenase (E3). This Staphylococcus aureus (strain MRSA252) protein is Dihydrolipoyllysine-residue acetyltransferase component of pyruvate dehydrogenase complex (pdhC).